The sequence spans 280 residues: Lysosome-associated membrane glycoprotein 5 (280 aa).

A signal peptide spans 1-29 (MDLRRRALLGVDGLRVLLMLFHTVTRIMA). The Extracellular segment spans residues 30-235 (EQEVENLSGL…PVDEREQLEE (206 aa)). N-linked (GlcNAc...) asparagine glycosylation is found at Asn-35 and Asn-53. A helical transmembrane segment spans residues 236 to 256 (TLPLILGLILGLVIVVTLVIY). Topologically, residues 257–280 (HIHHKMTANQVQIPRDRSQYKHMG) are cytoplasmic.

It belongs to the LAMP family. Post-translationally, glycosylated.

The protein resides in the cytoplasmic vesicle membrane. The protein localises to the cell membrane. It localises to the cell projection. It is found in the dendrite. Its subcellular location is the cytoplasmic vesicle. The protein resides in the secretory vesicle. The protein localises to the synaptic vesicle membrane. It localises to the growth cone membrane. It is found in the early endosome membrane. Its subcellular location is the recycling endosome. The protein resides in the endoplasmic reticulum-Golgi intermediate compartment membrane. The protein localises to the endosome membrane. Plays a role in short-term synaptic plasticity in a subset of GABAergic neurons in the brain. The protein is Lysosome-associated membrane glycoprotein 5 (LAMP5) of Bos taurus (Bovine).